A 215-amino-acid chain; its full sequence is Pyridoxine/pyridoxamine 5'-phosphate oxidase (215 aa).

Residues 9 to 12 and lysine 69 contribute to the substrate site; that span reads RRDY. FMN-binding positions include 64-69, 79-80, lysine 86, and glutamine 108; these read RVLLLK and FT. Substrate is bound by residues tyrosine 126, arginine 130, and serine 134. FMN is bound by residues 143 to 144 and tryptophan 188; that span reads QS. 194–196 is a binding site for substrate; it reads RLH. Arginine 198 is a binding site for FMN.

The protein belongs to the pyridoxamine 5'-phosphate oxidase family. In terms of assembly, homodimer. The cofactor is FMN.

The enzyme catalyses pyridoxamine 5'-phosphate + O2 + H2O = pyridoxal 5'-phosphate + H2O2 + NH4(+). It catalyses the reaction pyridoxine 5'-phosphate + O2 = pyridoxal 5'-phosphate + H2O2. The protein operates within cofactor metabolism; pyridoxal 5'-phosphate salvage; pyridoxal 5'-phosphate from pyridoxamine 5'-phosphate: step 1/1. It participates in cofactor metabolism; pyridoxal 5'-phosphate salvage; pyridoxal 5'-phosphate from pyridoxine 5'-phosphate: step 1/1. Its function is as follows. Catalyzes the oxidation of either pyridoxine 5'-phosphate (PNP) or pyridoxamine 5'-phosphate (PMP) into pyridoxal 5'-phosphate (PLP). This is Pyridoxine/pyridoxamine 5'-phosphate oxidase from Pseudomonas syringae pv. syringae (strain B728a).